A 1208-amino-acid polypeptide reads, in one-letter code: Calmodulin-binding transcription activator 2 (1208 aa).

The segment at residues 30 to 160 (RCPLLPPERL…YLNVPALEDC (131 aa)) is a DNA-binding region (CG-1). Positions 78-86 (NRKKVKYRK) match the Nuclear localization signal motif. Disordered stretches follow at residues 269–328 (ISHS…SRGG), 366–418 (VGSE…PCPA), and 437–507 (QLGA…ELEP). The segment covering 275–288 (PEPPPLIAPLPPEL) has biased composition (pro residues). 2 stretches are compositionally biased toward low complexity: residues 294–305 (SPSSSSSSSSSS) and 319–328 (TSRGGSSRGG). Composition is skewed to pro residues over residues 371–380 (SAPPAPPSPA) and 464–476 (TVPPVPSSPPSSP). The IPT/TIG domain occupies 544-622 (DFSPEWSYPE…LSASVLFEYR (79 aa)). ANK repeat units lie at residues 717–750 (RGMSLLHLAAAQGYARLIETLSQWRSVETGSLDL), 762–792 (FSCTPLMWACALGHLEAAVLLFCWNRQALSI), and 796–826 (LGRLPLSVAHSRGHVRLARCLEELQRQELSV). 2 disordered regions span residues 826–881 (VEHP…ASDI) and 908–936 (NSKEPAPSPCGPPLAQDNGAAPEDADSPP). A compositionally biased stretch (low complexity) spans 829–853 (PLALSPPSSSPDTGLSSASSPSELS). IQ domains are found at residues 1054-1083 (LYEAARVIQTAFRKYKGRRLKEQQEVAAAV) and 1107-1136 (MTQAAILIQSKFRSYYEQKRFQQSRRAAVL). The disordered stretch occupies residues 1144–1166 (YRRRPGPPHRPSGPLPARNKGTF).

Belongs to the CAMTA family. As to quaternary structure, may interact with calmodulin.

It localises to the nucleus. Transcription activator. May act as tumor suppressor. In Mus musculus (Mouse), this protein is Calmodulin-binding transcription activator 2 (Camta2).